Here is a 196-residue protein sequence, read N- to C-terminus: MNEAVSPGALSTLFTDARTHNGWRETPVSDETLQELYALMKWGPTSANCSPARIVFIRTAEGKERLRPALSSGNLQKTLTAPVTAIVAWDSEFYERLPLLFPHGDARSWFTSSPQLAEETAFRNSSMQAAYLIVACRALGLDTGPMSGFDRQHVDDAFFAGSTLKSNLLINIGYGDSSKLFARLPRLSFEEACGLL.

The protein belongs to the nitroreductase family. HadB/RutE subfamily. Requires FMN as cofactor.

The catalysed reaction is 3-hydroxypropanoate + NADP(+) = 3-oxopropanoate + NADPH + H(+). May reduce toxic product malonic semialdehyde to 3-hydroxypropionic acid, which is excreted. This Shigella flexneri serotype 5b (strain 8401) protein is Probable malonic semialdehyde reductase RutE.